A 72-amino-acid polypeptide reads, in one-letter code: Translation initiation factor IF-1 (72 aa).

The region spanning 1–72 is the S1-like domain; sequence MSKEELIEFE…TKGRITYRFK (72 aa).

This sequence belongs to the IF-1 family. As to quaternary structure, component of the 30S ribosomal translation pre-initiation complex which assembles on the 30S ribosome in the order IF-2 and IF-3, IF-1 and N-formylmethionyl-tRNA(fMet); mRNA recruitment can occur at any time during PIC assembly.

The protein localises to the cytoplasm. One of the essential components for the initiation of protein synthesis. Stabilizes the binding of IF-2 and IF-3 on the 30S subunit to which N-formylmethionyl-tRNA(fMet) subsequently binds. Helps modulate mRNA selection, yielding the 30S pre-initiation complex (PIC). Upon addition of the 50S ribosomal subunit IF-1, IF-2 and IF-3 are released leaving the mature 70S translation initiation complex. In Hyphomonas neptunium (strain ATCC 15444), this protein is Translation initiation factor IF-1.